The chain runs to 53 residues: Small ribosomal subunit protein uS14 (53 aa).

Zn(2+) contacts are provided by Cys-17, Cys-20, Cys-36, and Cys-39.

The protein belongs to the universal ribosomal protein uS14 family. Zinc-binding uS14 subfamily. Part of the 30S ribosomal subunit. Zn(2+) is required as a cofactor.

Its function is as follows. Binds 16S rRNA, required for the assembly of 30S particles. In Methanocaldococcus jannaschii (strain ATCC 43067 / DSM 2661 / JAL-1 / JCM 10045 / NBRC 100440) (Methanococcus jannaschii), this protein is Small ribosomal subunit protein uS14.